The chain runs to 590 residues: Aspartate--tRNA ligase (590 aa).

E175 contacts L-aspartate. Residues Q199–K202 form an aspartate region. R221 is an L-aspartate binding site. ATP is bound by residues R221 to E223 and Q230. Residue H449 coordinates L-aspartate. E483 contacts ATP. Residue R490 coordinates L-aspartate. G535–R538 contributes to the ATP binding site.

Belongs to the class-II aminoacyl-tRNA synthetase family. Type 1 subfamily. As to quaternary structure, homodimer.

It is found in the cytoplasm. It carries out the reaction tRNA(Asp) + L-aspartate + ATP = L-aspartyl-tRNA(Asp) + AMP + diphosphate. Functionally, catalyzes the attachment of L-aspartate to tRNA(Asp) in a two-step reaction: L-aspartate is first activated by ATP to form Asp-AMP and then transferred to the acceptor end of tRNA(Asp). This Geobacillus kaustophilus (strain HTA426) protein is Aspartate--tRNA ligase.